Here is a 517-residue protein sequence, read N- to C-terminus: GMP synthase [glutamine-hydrolyzing] (517 aa).

One can recognise a Glutamine amidotransferase type-1 domain in the interval 11-202; the sequence is KIIVLDFGSQ…AFKVCGAKAN (192 aa). Catalysis depends on Cys-88, which acts as the Nucleophile. Residues His-176 and Glu-178 contribute to the active site. Residues 203–392 form the GMPS ATP-PPase domain; the sequence is WTMDDFIEMQ…LGIPHDLVWR (190 aa). An ATP-binding site is contributed by 230–236; it reads SGGVDSS.

As to quaternary structure, homodimer.

It catalyses the reaction XMP + L-glutamine + ATP + H2O = GMP + L-glutamate + AMP + diphosphate + 2 H(+). The protein operates within purine metabolism; GMP biosynthesis; GMP from XMP (L-Gln route): step 1/1. Functionally, catalyzes the synthesis of GMP from XMP. The protein is GMP synthase [glutamine-hydrolyzing] of Lactobacillus johnsonii (strain CNCM I-12250 / La1 / NCC 533).